The primary structure comprises 283 residues: Phosphatidylserine decarboxylase proenzyme (283 aa).

Catalysis depends on charge relay system; for autoendoproteolytic cleavage activity residues aspartate 88, histidine 145, and serine 248. Serine 248 (schiff-base intermediate with substrate; via pyruvic acid; for decarboxylase activity) is an active-site residue. Serine 248 carries the pyruvic acid (Ser); by autocatalysis modification.

Belongs to the phosphatidylserine decarboxylase family. PSD-B subfamily. Prokaryotic type I sub-subfamily. As to quaternary structure, heterodimer of a large membrane-associated beta subunit and a small pyruvoyl-containing alpha subunit. Pyruvate serves as cofactor. Post-translationally, is synthesized initially as an inactive proenzyme. Formation of the active enzyme involves a self-maturation process in which the active site pyruvoyl group is generated from an internal serine residue via an autocatalytic post-translational modification. Two non-identical subunits are generated from the proenzyme in this reaction, and the pyruvate is formed at the N-terminus of the alpha chain, which is derived from the carboxyl end of the proenzyme. The autoendoproteolytic cleavage occurs by a canonical serine protease mechanism, in which the side chain hydroxyl group of the serine supplies its oxygen atom to form the C-terminus of the beta chain, while the remainder of the serine residue undergoes an oxidative deamination to produce ammonia and the pyruvoyl prosthetic group on the alpha chain. During this reaction, the Ser that is part of the protease active site of the proenzyme becomes the pyruvoyl prosthetic group, which constitutes an essential element of the active site of the mature decarboxylase.

Its subcellular location is the cell membrane. It catalyses the reaction a 1,2-diacyl-sn-glycero-3-phospho-L-serine + H(+) = a 1,2-diacyl-sn-glycero-3-phosphoethanolamine + CO2. The protein operates within phospholipid metabolism; phosphatidylethanolamine biosynthesis; phosphatidylethanolamine from CDP-diacylglycerol: step 2/2. Its function is as follows. Catalyzes the formation of phosphatidylethanolamine (PtdEtn) from phosphatidylserine (PtdSer). The sequence is that of Phosphatidylserine decarboxylase proenzyme from Methylibium petroleiphilum (strain ATCC BAA-1232 / LMG 22953 / PM1).